Here is a 280-residue protein sequence, read N- to C-terminus: Putative sugar uptake protein (280 aa).

Transmembrane regions (helical) follow at residues 4-21 (LIALIPALGWGIFSLIAG), 33-52 (MGLGTGALIIGIITAIIHPA), 56-78 (ITIFSLSLISGMFCALGQSGQFI), 91-113 (LSTGFQLIGNTLIGAIIFGEWTS), 117-136 (YLIGTLALILIIVGVSLTAI), 149-166 (IILLLFTSIGYWIYSSFP), 176-195 (LFLPQMIGIFIGSIIFLLVS), 207-229 (WLNIFSGFSYGIAAFSYIFSAQL), 233-255 (ITAFIYSQLCVIISTLGGIFFIG), and 262-279 (ELIATFVGLILIIIGAAI).

It belongs to the GRP transporter (TC 2.A.7.5) family.

It is found in the cell membrane. In Lactobacillus helveticus (Lactobacillus suntoryeus), this protein is Putative sugar uptake protein.